A 593-amino-acid chain; its full sequence is ATP-dependent RNA helicase MRH4, mitochondrial (593 aa).

The transit peptide at Met-1–Arg-36 directs the protein to the mitochondrion. The Q motif signature appears at Glu-132 to Gln-139. The region spanning Ser-177–Ile-399 is the Helicase ATP-binding domain. Ala-190–Thr-197 contacts ATP. Positions Asp-347–Asp-350 match the DEAD box motif. In terms of domain architecture, Helicase C-terminal spans Cys-433–Gly-593.

It belongs to the DEAD box helicase family. MRH4 subfamily.

Its subcellular location is the mitochondrion. The catalysed reaction is ATP + H2O = ADP + phosphate + H(+). Functionally, ATP-binding RNA helicase involved in mitochondrial RNA metabolism. Required for maintenance of mitochondrial DNA. This chain is ATP-dependent RNA helicase MRH4, mitochondrial (MRH4), found in Debaryomyces hansenii (strain ATCC 36239 / CBS 767 / BCRC 21394 / JCM 1990 / NBRC 0083 / IGC 2968) (Yeast).